The chain runs to 167 residues: Ureidoglycolate lyase (167 aa).

Belongs to the ureidoglycolate lyase family. As to quaternary structure, homodimer. The cofactor is Ni(2+).

The catalysed reaction is (S)-ureidoglycolate = urea + glyoxylate. It functions in the pathway nitrogen metabolism; (S)-allantoin degradation. In terms of biological role, catalyzes the catabolism of the allantoin degradation intermediate (S)-ureidoglycolate, generating urea and glyoxylate. Involved in the utilization of allantoin as nitrogen source. This chain is Ureidoglycolate lyase, found in Pseudomonas entomophila (strain L48).